A 372-amino-acid chain; its full sequence is Alanine dehydrogenase (372 aa).

Substrate contacts are provided by Arg15 and Lys75. His96 (proton donor/acceptor) is an active-site residue. NAD(+)-binding positions include Ser134, 178–179, Asp198, Ser220, 239–240, 267–270, Arg280, and 299–302; these read IA, VL, IAID, and VANM. Asp270 serves as the catalytic Proton donor/acceptor.

Belongs to the AlaDH/PNT family. Homohexamer.

It localises to the cytoplasm. It carries out the reaction L-alanine + NAD(+) + H2O = pyruvate + NH4(+) + NADH + H(+). The protein operates within amino-acid degradation; L-alanine degradation via dehydrogenase pathway; NH(3) and pyruvate from L-alanine: step 1/1. Its activity is regulated as follows. Inhibited by p-chloromercuribenzoate and HgCl(2) and by Cu(2+) and Pb(2+) salts, unaffected by amino acids such as D-alanine and beta-alanine or by nucleotides or nucleosides. Functionally, catalyzes the reversible reductive amination of pyruvate to L-alanine. Prefers L-alanine for oxidative deamination, other substrates are poorly reactive. In the other direction 2-oxobutyrate is almost as reactive as pyruvate. Ammonia is the sole amino donor for the reductive amination of pyruvate, NADPH is inert. Reductive amination proceeds through a sequential, ordered ternary-binary mechanism, where NADH binds first followed by ammonia and pyruvate; the products are released in the order L-alanine and NAD(+). A key factor in the assimilation of L-alanine as an energy source via the tricarboxylic acid cycle during sporulation. The chain is Alanine dehydrogenase (ald) from Lysinibacillus sphaericus (Bacillus sphaericus).